A 341-amino-acid chain; its full sequence is MLVLGIESSCDETGLALYDTERGLLAHALHSQIAMHREYGGVVPELASRDHIRRALPLLEEVLERSGAARGDIDAIAYTQGPGLAGALLVGASIANSLAMAWNKPTIGIHHLEGHLLSPLLVDEPPPFPFVALLVSGGHTQLMRVTDVGVYETLGETLDDAAGEAFDKTAKLLGLGYPGGPEVSRLAEFGTPGAVVLPRPMLHSGDLDFSFSGLKTAVLTHVKKLGGNVCEQAKADLARGFVDAAVEVLAVKSLAALKKTKLKRLVVAGGVGANRQLREALSSAAQKRGFAVHYPDLSLCTDNGAMIALAGALRMQRWPAQATDDYAFTVKPRWDLGSLGA.

Residues His111 and His115 each coordinate Fe cation. Substrate is bound by residues 134 to 138 (LVSGG), Asp167, Gly180, and Asn274. Asp302 lines the Fe cation pocket.

It belongs to the KAE1 / TsaD family. The cofactor is Fe(2+).

The protein resides in the cytoplasm. It catalyses the reaction L-threonylcarbamoyladenylate + adenosine(37) in tRNA = N(6)-L-threonylcarbamoyladenosine(37) in tRNA + AMP + H(+). In terms of biological role, required for the formation of a threonylcarbamoyl group on adenosine at position 37 (t(6)A37) in tRNAs that read codons beginning with adenine. Is involved in the transfer of the threonylcarbamoyl moiety of threonylcarbamoyl-AMP (TC-AMP) to the N6 group of A37, together with TsaE and TsaB. TsaD likely plays a direct catalytic role in this reaction. The polypeptide is tRNA N6-adenosine threonylcarbamoyltransferase (Paraburkholderia phymatum (strain DSM 17167 / CIP 108236 / LMG 21445 / STM815) (Burkholderia phymatum)).